We begin with the raw amino-acid sequence, 303 residues long: Glycine--tRNA ligase alpha subunit (303 aa).

It belongs to the class-II aminoacyl-tRNA synthetase family. As to quaternary structure, tetramer of two alpha and two beta subunits.

Its subcellular location is the cytoplasm. It catalyses the reaction tRNA(Gly) + glycine + ATP = glycyl-tRNA(Gly) + AMP + diphosphate. The sequence is that of Glycine--tRNA ligase alpha subunit from Cronobacter sakazakii (strain ATCC BAA-894) (Enterobacter sakazakii).